A 306-amino-acid chain; its full sequence is Mycothiol acetyltransferase (306 aa).

N-acetyltransferase domains follow at residues 5 to 157 (EIYE…EPAA) and 159 to 306 (ITIR…HKKL). A 1D-myo-inositol 2-(L-cysteinylamino)-2-deoxy-alpha-D-glucopyranoside-binding site is contributed by glutamate 36. 82-84 (MLV) serves as a coordination point for acetyl-CoA. Positions 186, 227, and 238 each coordinate 1D-myo-inositol 2-(L-cysteinylamino)-2-deoxy-alpha-D-glucopyranoside. Position 242-244 (242-244 (LGV)) interacts with acetyl-CoA. 1D-myo-inositol 2-(L-cysteinylamino)-2-deoxy-alpha-D-glucopyranoside is bound at residue tyrosine 276. 281–286 (NVRAVR) contacts acetyl-CoA.

The protein belongs to the acetyltransferase family. MshD subfamily. As to quaternary structure, monomer.

It catalyses the reaction 1D-myo-inositol 2-(L-cysteinylamino)-2-deoxy-alpha-D-glucopyranoside + acetyl-CoA = mycothiol + CoA + H(+). Catalyzes the transfer of acetyl from acetyl-CoA to desacetylmycothiol (Cys-GlcN-Ins) to form mycothiol. This Stackebrandtia nassauensis (strain DSM 44728 / CIP 108903 / NRRL B-16338 / NBRC 102104 / LLR-40K-21) protein is Mycothiol acetyltransferase.